The primary structure comprises 168 residues: Phosphopantetheine adenylyltransferase (168 aa).

Ser-9 is a binding site for substrate. ATP-binding positions include 9–10 (SF) and His-17. Substrate is bound by residues Lys-41, Leu-73, and Arg-87. ATP-binding positions include 88–90 (GMR), Glu-98, and 123–129 (WIYTSSS).

This sequence belongs to the bacterial CoaD family. In terms of assembly, homohexamer. The cofactor is Mg(2+).

Its subcellular location is the cytoplasm. It carries out the reaction (R)-4'-phosphopantetheine + ATP + H(+) = 3'-dephospho-CoA + diphosphate. The protein operates within cofactor biosynthesis; coenzyme A biosynthesis; CoA from (R)-pantothenate: step 4/5. In terms of biological role, reversibly transfers an adenylyl group from ATP to 4'-phosphopantetheine, yielding dephospho-CoA (dPCoA) and pyrophosphate. The sequence is that of Phosphopantetheine adenylyltransferase from Desulfosudis oleivorans (strain DSM 6200 / JCM 39069 / Hxd3) (Desulfococcus oleovorans).